We begin with the raw amino-acid sequence, 1263 residues long: Valine--tRNA ligase (1263 aa).

The residue at position 2 (S2) is an N-acetylserine. The GST C-terminal domain maps to 89–219 (GSRAAVLVQQ…YSGARSVTQQ (131 aa)). The tract at residues 218–294 (QQPGSEVIAP…PGEKKDVSGA (77 aa)) is disordered. Basic and acidic residues-rich tracts occupy residues 234 to 248 (LKKEAKKREKLEKFQ) and 259 to 274 (HGEKKPKPEKKEKRDP). The 'HIGH' region motif lies at 343-353 (PNVTGSLHLGH). Phosphoserine occurs at positions 436 and 526. Residue K644 is modified to N6-acetyllysine. Residues 861 to 865 (KMSKS) carry the 'KMSKS' region motif. K864 provides a ligand contact to ATP.

The protein belongs to the class-I aminoacyl-tRNA synthetase family. As to quaternary structure, forms high-molecular-mass aggregates with elongation factor 1.

It catalyses the reaction tRNA(Val) + L-valine + ATP = L-valyl-tRNA(Val) + AMP + diphosphate. Can be regulated by protein kinase C-dependent phosphorylation. The polypeptide is Valine--tRNA ligase (Vars1) (Mus musculus (Mouse)).